Here is a 720-residue protein sequence, read N- to C-terminus: Methionine--tRNA ligase (720 aa).

Positions 27–37 (PYANGQIHIGH) match the 'HIGH' region motif. The Zn(2+) site is built by C158, C161, C171, and C174. The 'KMSKS' region motif lies at 348-352 (KMSKS). Position 351 (K351) interacts with ATP. A tRNA-binding domain is found at 614-720 (DFAKVDLRIA…SGAKPGMRVK (107 aa)).

Belongs to the class-I aminoacyl-tRNA synthetase family. MetG type 1 subfamily. Homodimer. Zn(2+) serves as cofactor.

The protein localises to the cytoplasm. The enzyme catalyses tRNA(Met) + L-methionine + ATP = L-methionyl-tRNA(Met) + AMP + diphosphate. Its function is as follows. Is required not only for elongation of protein synthesis but also for the initiation of all mRNA translation through initiator tRNA(fMet) aminoacylation. This chain is Methionine--tRNA ligase, found in Burkholderia ambifaria (strain MC40-6).